We begin with the raw amino-acid sequence, 396 residues long: Elongation factor Tu (396 aa).

One can recognise a tr-type G domain in the interval 10-206 (KLHVNVGTIG…ALDTHIPNPE (197 aa)). Positions 19–26 (GHVDHGKT) are G1. A GTP-binding site is contributed by 19-26 (GHVDHGKT). Residue threonine 26 coordinates Mg(2+). The segment at 60–64 (GITIS) is G2. Residues 81–84 (DCPG) are G3. GTP is bound by residues 81–85 (DCPGH) and 136–139 (NKAD). The G4 stretch occupies residues 136–139 (NKAD). Positions 174–176 (SAL) are G5.

This sequence belongs to the TRAFAC class translation factor GTPase superfamily. Classic translation factor GTPase family. EF-Tu/EF-1A subfamily. Monomer.

The protein resides in the cytoplasm. It carries out the reaction GTP + H2O = GDP + phosphate + H(+). Functionally, GTP hydrolase that promotes the GTP-dependent binding of aminoacyl-tRNA to the A-site of ribosomes during protein biosynthesis. The chain is Elongation factor Tu from Xylella fastidiosa (strain Temecula1 / ATCC 700964).